We begin with the raw amino-acid sequence, 236 residues long: Uridylate kinase (236 aa).

ATP is bound at residue 10–13 (KLSG). Residue Gly52 participates in UMP binding. ATP-binding residues include Gly53 and Arg57. Residues Asp72 and 133-140 (TGNPFFTT) each bind UMP. ATP-binding residues include Thr160, Tyr166, and Asp169.

The protein belongs to the UMP kinase family. In terms of assembly, homohexamer.

The protein resides in the cytoplasm. It carries out the reaction UMP + ATP = UDP + ADP. The protein operates within pyrimidine metabolism; CTP biosynthesis via de novo pathway; UDP from UMP (UMPK route): step 1/1. With respect to regulation, inhibited by UTP. Functionally, catalyzes the reversible phosphorylation of UMP to UDP. This Cupriavidus metallidurans (strain ATCC 43123 / DSM 2839 / NBRC 102507 / CH34) (Ralstonia metallidurans) protein is Uridylate kinase.